A 56-amino-acid chain; its full sequence is Probable head completion protein 2 (56 aa).

It belongs to the skunalikevirus head completion protein 2 family.

The protein resides in the virion. Its function is as follows. Probably functions as a stopper that is part of the head-tail connector and that locks the viral DNA in the capsid. During assembly, functions as a docking platform which the preassembled tail can bind to. Plays a role in morphogenesis of the virion capsid after genome packaging. This Lactococcus lactis (Lactococcus lactis bacteriophage SK1) protein is Probable head completion protein 2.